We begin with the raw amino-acid sequence, 290 residues long: tRNA pseudouridine synthase A (290 aa).

Catalysis depends on Asp-56, which acts as the Nucleophile. Tyr-109 provides a ligand contact to substrate.

Belongs to the tRNA pseudouridine synthase TruA family.

It carries out the reaction uridine(38/39/40) in tRNA = pseudouridine(38/39/40) in tRNA. Formation of pseudouridine at positions 38, 39 and 40 in the anticodon stem and loop of transfer RNAs. In Methanobrevibacter smithii (strain ATCC 35061 / DSM 861 / OCM 144 / PS), this protein is tRNA pseudouridine synthase A.